The primary structure comprises 91 residues: Apolipoprotein C-III (91 aa).

An N-terminal signal peptide occupies residues 1–20 (MQPRVLLAVTLLALLVSARA). Position 63 is a methionine sulfoxide (Met63). Residues 68 to 91 (DSMKGYWTSLIGRLSGFLDSTPSS) are lipid-binding.

It belongs to the apolipoprotein C3 family.

The protein localises to the secreted. Component of triglyceride-rich very low density lipoproteins (VLDL) and high density lipoproteins (HDL) in plasma. Plays a multifaceted role in triglyceride homeostasis. Intracellularly, promotes hepatic very low density lipoprotein 1 (VLDL1) assembly and secretion; extracellularly, attenuates hydrolysis and clearance of triglyceride-rich lipoproteins (TRLs). Impairs the lipolysis of TRLs by inhibiting lipoprotein lipase and the hepatic uptake of TRLs by remnant receptors. Formed of several curved helices connected via semiflexible hinges, so that it can wrap tightly around the curved micelle surface and easily adapt to the different diameters of its natural binding partners. This chain is Apolipoprotein C-III (APOC3), found in Cavia porcellus (Guinea pig).